The primary structure comprises 373 residues: Muconate cycloisomerase 1 (373 aa).

K169 is an active-site residue. K169 (proton acceptor) is an active-site residue. The Mn(2+) site is built by D198, E224, and D249. The Proton donor role is filled by E327.

It belongs to the mandelate racemase/muconate lactonizing enzyme family. It depends on Mn(2+) as a cofactor.

The catalysed reaction is (S)-muconolactone = cis,cis-muconate + H(+). The protein is Muconate cycloisomerase 1 (catB) of Rhodococcus opacus (Nocardia opaca).